Consider the following 243-residue polypeptide: Isoprenyl transferase 2 (243 aa).

Residue Asp23 is part of the active site. Asp23 contributes to the Mg(2+) binding site. Residues 24–27, Trp28, Arg36, His40, and 68–70 each bind substrate; these read GNGR and STE. The active-site Proton acceptor is the Asn71. Residues Trp72, Arg74, Arg191, and 197–199 contribute to the substrate site; that span reads RTS. Residue Glu210 coordinates Mg(2+).

The protein belongs to the UPP synthase family. Homodimer. It depends on Mg(2+) as a cofactor.

Catalyzes the condensation of isopentenyl diphosphate (IPP) with allylic pyrophosphates generating different type of terpenoids. The sequence is that of Isoprenyl transferase 2 from Corynebacterium efficiens (strain DSM 44549 / YS-314 / AJ 12310 / JCM 11189 / NBRC 100395).